The primary structure comprises 929 residues: SED5-binding protein 3 (929 aa).

Phosphoserine is present on Ser-15. Over residues 18–28 (ESTVHTGGASS) the composition is skewed to polar residues. A disordered region spans residues 18–52 (ESTVHTGGASSKKSRRPHRAYHNFSSGTVPTLGNS). The segment covering 29–38 (KKSRRPHRAY) has biased composition (basic residues). The segment covering 40-52 (NFSSGTVPTLGNS) has biased composition (polar residues). Residue Thr-72 is modified to Phosphothreonine. Phosphoserine is present on residues Ser-83, Ser-85, Ser-94, Ser-101, and Ser-110. Thr-216 carries the phosphothreonine modification. The tract at residues 220 to 244 (CRRCRAYANPKFQFTYDSSVICNIC) is zinc finger-like.

The protein belongs to the SEC23/SEC24 family. SEC24 subfamily. As to quaternary structure, COPII is composed of at least five proteins: the SEC23/24 complex, the SEC13/31 complex and SAR1. Binds to SED5. Interacts with GHR1.

It localises to the cytoplasm. The protein resides in the golgi apparatus membrane. Its subcellular location is the endoplasmic reticulum membrane. In terms of biological role, component of the COPII coat, that covers ER-derived vesicles involved in transport from the endoplasmic reticulum to the Golgi apparatus. COPII acts in the cytoplasm to promote the transport of secretory, plasma membrane, and vacuolar proteins from the endoplasmic reticulum to the Golgi complex. The sequence is that of SED5-binding protein 3 (SFB3) from Saccharomyces cerevisiae (strain ATCC 204508 / S288c) (Baker's yeast).